A 188-amino-acid polypeptide reads, in one-letter code: Large ribosomal subunit protein eL18 (188 aa).

Residues 143–188 are disordered; that stretch reads RSAREAEKHFGPAPGVPHSHTKPHVRSKGRKFERARGRRASRAYKN. 2 stretches are compositionally biased toward basic residues: residues 161 to 171 and 178 to 188; these read SHTKPHVRSKG and RGRRASRAYKN.

The protein belongs to the eukaryotic ribosomal protein eL18 family.

It is found in the cytoplasm. This chain is Large ribosomal subunit protein eL18 (rpl-18), found in Caenorhabditis briggsae.